A 297-amino-acid polypeptide reads, in one-letter code: Aspartate carbamoyltransferase catalytic subunit (297 aa).

Carbamoyl phosphate is bound by residues R51 and T52. An L-aspartate-binding site is contributed by K79. Positions 101, 129, and 132 each coordinate carbamoyl phosphate. L-aspartate contacts are provided by R162 and R216. Residues G257 and P258 each contribute to the carbamoyl phosphate site.

Belongs to the aspartate/ornithine carbamoyltransferase superfamily. ATCase family. As to quaternary structure, heterododecamer (2C3:3R2) of six catalytic PyrB chains organized as two trimers (C3), and six regulatory PyrI chains organized as three dimers (R2).

It carries out the reaction carbamoyl phosphate + L-aspartate = N-carbamoyl-L-aspartate + phosphate + H(+). It functions in the pathway pyrimidine metabolism; UMP biosynthesis via de novo pathway; (S)-dihydroorotate from bicarbonate: step 2/3. Functionally, catalyzes the condensation of carbamoyl phosphate and aspartate to form carbamoyl aspartate and inorganic phosphate, the committed step in the de novo pyrimidine nucleotide biosynthesis pathway. The sequence is that of Aspartate carbamoyltransferase catalytic subunit from Myxococcus xanthus (strain DK1622).